The sequence spans 68 residues: Putative membrane protein insertion efficiency factor (68 aa).

The protein belongs to the UPF0161 family.

The protein resides in the cell membrane. Functionally, could be involved in insertion of integral membrane proteins into the membrane. This chain is Putative membrane protein insertion efficiency factor, found in Herpetosiphon aurantiacus (strain ATCC 23779 / DSM 785 / 114-95).